Consider the following 180-residue polypeptide: ATP-dependent protease subunit HslV (180 aa).

Threonine 5 is a catalytic residue. Residues glycine 165, cysteine 168, and threonine 171 each coordinate Na(+).

Belongs to the peptidase T1B family. HslV subfamily. As to quaternary structure, a double ring-shaped homohexamer of HslV is capped on each side by a ring-shaped HslU homohexamer. The assembly of the HslU/HslV complex is dependent on binding of ATP.

The protein resides in the cytoplasm. It catalyses the reaction ATP-dependent cleavage of peptide bonds with broad specificity.. Allosterically activated by HslU binding. Functionally, protease subunit of a proteasome-like degradation complex believed to be a general protein degrading machinery. The sequence is that of ATP-dependent protease subunit HslV from Helicobacter pylori (strain ATCC 700392 / 26695) (Campylobacter pylori).